A 380-amino-acid chain; its full sequence is MSDKINVWTTSRDSAVCGDIELKKTSTTRLIFRPEIVNNNKNPKASVRGCFIFQKKGRNALWDDYKELDMNKLKAEEWIKLEINSDAMLTLTKEIQKHYAVHEKYGVRYGAFHLFKDNPDIEKLIEMFESNTDLLTQLMEDDKSEALEKTLEWIVTNDNPDKIIDRLKNLKEQDLDQLNTLIGIANLKKVLSVWESNKLTNTSEKFWQSVLKENTWILSQIFSNPTVLINDEAYVGGKTVKNDSGKLVDFLYANPFSKDAVLIEIKTPSTPLITPTEYRTGVYSAHKDLTGAVTQVLTYKTTLQREYQNIDYNNYRQGIKTDFDIITPCCVVIAGMFDTLTDTAHRHSFELYRKELKNVTVITFDELFERVKGLIKLLEG.

Only component of antiviral defense system Shedu. Expression of Shedu in B.subtilis (strain BEST7003) confers resistance to phages phi105, phi29, rho14 and to a lesser extent to SPP1. May be an endonuclease. In Bacillus cereus (strain B4264), this protein is Shedu protein SduA.